The sequence spans 802 residues: Putative flavin carrier protein 3 (802 aa).

Residues 1–28 (MRFLQVYKSSALIGLIILLASKVNLAEA) form the signal peptide. Over 29 to 169 (KRKLVATSLV…YFSNGKTVSQ (141 aa)) the chain is Lumenal. An N-linked (GlcNAc...) asparagine glycan is attached at Asn149. A helical transmembrane segment spans residues 170–190 (IGVKWATAVVAGIGLLLSAIL). Residues 191-200 (STFGNSTAAS) lie on the Cytoplasmic side of the membrane. A helical transmembrane segment spans residues 201–221 (HISANTMSLFLYFQSVVVVAM). Over 222–229 (QHVHRVPP) the chain is Lumenal. A helical transmembrane segment spans residues 230–250 (IAAAWAENLVWSMGLIRISFM). The Cytoplasmic segment spans residues 251–255 (QRIFR). Residues 256 to 278 (WYVQSTGGTPSLYLTSTSMSVLA) form a helical membrane-spanning segment. At 279–323 (QRSWQYLMELPLIKRATNVLYGNANTLIFRGIKRLGYKMGIENTS) the chain is on the lumenal side. A glycan (N-linked (GlcNAc...) asparagine) is linked at Asn321. A helical transmembrane segment spans residues 324 to 344 (IVCTGFTFFVLCGYVLAGFII). The Cytoplasmic portion of the chain corresponds to 345–377 (VFKCCVELATRLGWIQKARFWEFRKQWRMILKG). A helical transmembrane segment spans residues 378 to 398 (ALLRYIYIGFVQLTILSFWEF). Residues 399–405 (TERDSPA) are Lumenal-facing. The helical transmembrane segment at 406–426 (VIVIACLFILLSCGLMLWAAW) threads the bilayer. Residues 427–467 (RTVFFARRSVALYNNPAALLYGDEYVLHKYGFFYTMFNANH) are Cytoplasmic-facing. Residues 468–488 (YWWNIVLLSYIFVKSLLVGFA) form a helical membrane-spanning segment. Residues 489–495 (QASGQTQ) lie on the Lumenal side of the membrane. Residues 496–516 (VLFMFILDLFYFVAIIYYKPY) form a helical membrane-spanning segment. Topologically, residues 517 to 525 (LDRPTNIMN) are cytoplasmic. A helical transmembrane segment spans residues 526 to 546 (ILIATVTVVNSFLFMFFSDLF). N-linked (GlcNAc...) asparagine glycosylation occurs at Asn547. The Lumenal portion of the chain corresponds to 547–557 (NQSYKVAAIMG). The chain crosses the membrane as a helical span at residues 558 to 578 (WIFFIMNAAFSFILLMMILAF). Residues 579 to 802 (AGMMLFSKNP…PPGFFDEGFM (224 aa)) lie on the Cytoplasmic side of the membrane. 2 positions are modified to phosphoserine: Ser616 and Ser635. The disordered stretch occupies residues 629–802 (KDHDDNSDYE…PPGFFDEGFM (174 aa)). 3 stretches are compositionally biased toward polar residues: residues 653 to 663 (DETTPTTVTSS), 697 to 717 (KQQTFPHNLTNLSRENLSTLG), and 761 to 788 (DTSSSDGGFRSQNYVRDDSINSLGNNKQ). Phosphoserine occurs at positions 779 and 782.

The protein belongs to the transient receptor potential (TRP) ion channel family.

It localises to the endoplasmic reticulum membrane. May be responsible for the transport of FAD into the endoplasmic reticulum lumen, where it is required for oxidative protein folding. This chain is Putative flavin carrier protein 3 (FLC3), found in Saccharomyces cerevisiae (strain ATCC 204508 / S288c) (Baker's yeast).